Reading from the N-terminus, the 175-residue chain is uncharacterized protein (175 aa).

This is an uncharacterized protein from Archaeoglobus fulgidus (strain ATCC 49558 / DSM 4304 / JCM 9628 / NBRC 100126 / VC-16).